Consider the following 161-residue polypeptide: RNA pyrophosphohydrolase (161 aa).

The Nudix hydrolase domain maps to 6–149; that stretch reads GYRPNVGIIL…KREVYRRAMR (144 aa). The Nudix box signature appears at 38–59; that stretch reads GGIKKDESPEEALFRELKEEVG.

This sequence belongs to the Nudix hydrolase family. RppH subfamily. The cofactor is a divalent metal cation.

Its function is as follows. Accelerates the degradation of transcripts by removing pyrophosphate from the 5'-end of triphosphorylated RNA, leading to a more labile monophosphorylated state that can stimulate subsequent ribonuclease cleavage. This Hahella chejuensis (strain KCTC 2396) protein is RNA pyrophosphohydrolase.